The chain runs to 61 residues: UPF0370 protein Spro_3503 (61 aa).

Residues 3–23 form a helical membrane-spanning segment; it reads WLADYWWIILLILVGMIISGI. Over residues 38–48 the composition is skewed to basic and acidic residues; sequence KPELPPHRDNN. The tract at residues 38–61 is disordered; the sequence is KPELPPHRDNNAEWDDDDDWPKKK. Acidic residues predominate over residues 49–61; sequence AEWDDDDDWPKKK.

This sequence belongs to the UPF0370 family.

It is found in the cell membrane. This chain is UPF0370 protein Spro_3503, found in Serratia proteamaculans (strain 568).